We begin with the raw amino-acid sequence, 913 residues long: Polyribonucleotide nucleotidyltransferase (913 aa).

Positions 407–427 are disordered; the sequence is YMHNYEMPPYSTGETGRVGSP. Residues Asp521 and Asp527 each coordinate Mg(2+). A KH domain is found at 587–646; that stretch reads PRIITTSVPVEKIGEVIGPKGKMINQIQEDTGAEIAIEDDGTVFISSEGGEAAEKAKAII. Residues 658 to 730 enclose the S1 motif domain; the sequence is GETYNGKVVK…DRGKISLAIP (73 aa). Positions 727–913 are disordered; sequence LAIPGFEDQE…VRRDFDPFED (187 aa). 3 stretches are compositionally biased toward basic and acidic residues: residues 742-789, 797-865, and 872-898; these read SRGD…RRSD, DRPR…DRRG, and RGSD…ERTE.

The protein belongs to the polyribonucleotide nucleotidyltransferase family. The cofactor is Mg(2+).

Its subcellular location is the cytoplasm. The catalysed reaction is RNA(n+1) + phosphate = RNA(n) + a ribonucleoside 5'-diphosphate. Functionally, involved in mRNA degradation. Catalyzes the phosphorolysis of single-stranded polyribonucleotides processively in the 3'- to 5'-direction. In Bifidobacterium longum (strain DJO10A), this protein is Polyribonucleotide nucleotidyltransferase.